The sequence spans 286 residues: 33 kDa chaperonin (286 aa).

2 disulfide bridges follow: C225–C227 and C258–C261.

It belongs to the HSP33 family. Under oxidizing conditions two disulfide bonds are formed involving the reactive cysteines. Under reducing conditions zinc is bound to the reactive cysteines and the protein is inactive.

The protein resides in the cytoplasm. Redox regulated molecular chaperone. Protects both thermally unfolding and oxidatively damaged proteins from irreversible aggregation. Plays an important role in the bacterial defense system toward oxidative stress. The protein is 33 kDa chaperonin of Shewanella putrefaciens (strain CN-32 / ATCC BAA-453).